Reading from the N-terminus, the 253-residue chain is Indole-3-glycerol phosphate synthase (253 aa).

It belongs to the TrpC family.

The catalysed reaction is 1-(2-carboxyphenylamino)-1-deoxy-D-ribulose 5-phosphate + H(+) = (1S,2R)-1-C-(indol-3-yl)glycerol 3-phosphate + CO2 + H2O. It functions in the pathway amino-acid biosynthesis; L-tryptophan biosynthesis; L-tryptophan from chorismate: step 4/5. This chain is Indole-3-glycerol phosphate synthase, found in Bacillus cereus (strain B4264).